A 746-amino-acid polypeptide reads, in one-letter code: Chitin biosynthesis protein CHS6 (746 aa).

Residues 1–25 (MNLFWPSETKKQNEIPGGDYTPGNS) are disordered. Positions 734-746 (LAWIADLDHTVQP) are CHS5-binding.

This sequence belongs to the CHAPS family. Component of the CHS5/6 complex composed of the 4 CHAPS proteins BCH1, BCH2, BUD7, and CHS6 as well as at least CHS5 and GTP-bound ARF1. The complex interacts with the cargo protein CHS3.

The protein localises to the golgi apparatus. It is found in the trans-Golgi network membrane. Member of the CHS5-ARF1P-binding proteins (CHAPS) which mediates export of specific cargo proteins, including chitin synthase CHS3. This is Chitin biosynthesis protein CHS6 (CHS6) from Saccharomyces cerevisiae (strain ATCC 204508 / S288c) (Baker's yeast).